The chain runs to 552 residues: Small ribosomal subunit protein bS1 (552 aa).

6 consecutive S1 motif domains span residues 31 to 101 (TIKE…ISQQ), 116 to 179 (NAII…ISRK), 200 to 268 (TEPV…LSIK), 285 to 355 (GYAI…VSLK), 372 to 440 (GDIV…LSAK), and 457 to 521 (DSVI…ASVH).

This sequence belongs to the bacterial ribosomal protein bS1 family.

Its function is as follows. Binds mRNA; thus facilitating recognition of the initiation point. It is needed to translate mRNA with a short Shine-Dalgarno (SD) purine-rich sequence. In Helicobacter pylori (strain J99 / ATCC 700824) (Campylobacter pylori J99), this protein is Small ribosomal subunit protein bS1 (rpsA).